A 513-amino-acid polypeptide reads, in one-letter code: Zinc finger CCCH-type with G patch domain-containing protein (513 aa).

The C3H1-type zinc-finger motif lies at 155-178 (PCSYYLEGECRFDEAKCRFSHGAL). Composition is skewed to acidic residues over residues 252–261 (DQDEDDELSS) and 273–283 (SDEAESDMDDL). Residues 252 to 283 (DQDEDDELSSEESTSSMRDASSDEAESDMDDL) are disordered. Positions 312 to 358 (TRGIGSKLMEKMGYIHGTGLGSEGRGIVTPVSAQILPQGRSLDACME) constitute a G-patch domain. Disordered regions lie at residues 411 to 430 (PGES…NNEL) and 477 to 513 (QVQM…MFEF). A compositionally biased stretch (polar residues) spans 477–495 (QVQMQSHKQELATLQAQER). Positions 496 to 513 (SLSKEQQTRKSKNKMFEF) are enriched in basic and acidic residues.

It localises to the nucleus. Transcription repressor. The polypeptide is Zinc finger CCCH-type with G patch domain-containing protein (Drosophila sechellia (Fruit fly)).